The sequence spans 177 residues: ATP synthase subunit delta (177 aa).

Belongs to the ATPase delta chain family. F-type ATPases have 2 components, F(1) - the catalytic core - and F(0) - the membrane proton channel. F(1) has five subunits: alpha(3), beta(3), gamma(1), delta(1), epsilon(1). F(0) has three main subunits: a(1), b(2) and c(10-14). The alpha and beta chains form an alternating ring which encloses part of the gamma chain. F(1) is attached to F(0) by a central stalk formed by the gamma and epsilon chains, while a peripheral stalk is formed by the delta and b chains.

Its subcellular location is the cell membrane. Its function is as follows. F(1)F(0) ATP synthase produces ATP from ADP in the presence of a proton or sodium gradient. F-type ATPases consist of two structural domains, F(1) containing the extramembraneous catalytic core and F(0) containing the membrane proton channel, linked together by a central stalk and a peripheral stalk. During catalysis, ATP synthesis in the catalytic domain of F(1) is coupled via a rotary mechanism of the central stalk subunits to proton translocation. Functionally, this protein is part of the stalk that links CF(0) to CF(1). It either transmits conformational changes from CF(0) to CF(1) or is implicated in proton conduction. This is ATP synthase subunit delta from Carboxydothermus hydrogenoformans (strain ATCC BAA-161 / DSM 6008 / Z-2901).